The primary structure comprises 326 residues: Putative ribose-phosphate pyrophosphokinase 2 (326 aa).

Residues 43–45 (DGE) and 102–103 (RQ) each bind ATP. His136 lines the Mg(2+) pocket. D-ribose 5-phosphate contacts are provided by residues Asp226 and 230-234 (NTGKT).

The protein belongs to the ribose-phosphate pyrophosphokinase family. Class I subfamily. As to quaternary structure, homohexamer. Mg(2+) serves as cofactor.

The protein resides in the cytoplasm. The catalysed reaction is D-ribose 5-phosphate + ATP = 5-phospho-alpha-D-ribose 1-diphosphate + AMP + H(+). The protein operates within metabolic intermediate biosynthesis; 5-phospho-alpha-D-ribose 1-diphosphate biosynthesis; 5-phospho-alpha-D-ribose 1-diphosphate from D-ribose 5-phosphate (route I): step 1/1. Its function is as follows. Involved in the biosynthesis of the central metabolite phospho-alpha-D-ribosyl-1-pyrophosphate (PRPP) via the transfer of pyrophosphoryl group from ATP to 1-hydroxyl of ribose-5-phosphate (Rib-5-P). This chain is Putative ribose-phosphate pyrophosphokinase 2, found in Streptococcus mutans serotype c (strain ATCC 700610 / UA159).